The sequence spans 445 residues: Gamma conglutin 2 (445 aa).

Positions 1–33 (MAQNMAPIFHFIAISLSCSFLFVLSSSQDSQSL) are cleaved as a signal peptide. A Peptidase A1 domain is found at 60 to 425 (HWANIHKRTP…DFAKSRVEFN (366 aa)). Disulfide bonds link Cys-88–Cys-178, Cys-102–Cys-115, Cys-107–Cys-133, Cys-118–Cys-128, and Cys-346–Cys-387. A glycan (N-linked (GlcNAc...) asparagine) is linked at Asn-130.

Belongs to the peptidase A1 family. In terms of assembly, two-subunit monomeric unit made of alpha and beta subunits coupled by disulfide bonds (at pH 4.5 and under non-reducing conditions). Can also form oligomers including dimer, tetramer and cyclic hexamer (trimer of dimers) (at pH &gt; 5.5). Component of globulins complexes which accumulate in seeds. Interacts with flavonoids (e.g. apigenin glucosides) present in globulins complexes. Glycosylated on alpha chain.

Its subcellular location is the secreted. The protein resides in the extracellular space. Its function is as follows. Sulfur-rich seed storage protein that remains undegraded at germination. The polypeptide is Gamma conglutin 2 (Lupinus angustifolius (Narrow-leaved blue lupine)).